Here is a 128-residue protein sequence, read N- to C-terminus: Large ribosomal subunit protein bL19 (128 aa).

This sequence belongs to the bacterial ribosomal protein bL19 family.

This protein is located at the 30S-50S ribosomal subunit interface and may play a role in the structure and function of the aminoacyl-tRNA binding site. The polypeptide is Large ribosomal subunit protein bL19 (Azoarcus sp. (strain BH72)).